Consider the following 102-residue polypeptide: Small ribosomal subunit protein uS10 (102 aa).

The interval 30–58 is disordered; the sequence is TGVNLSGPIPLPTKTLEIPTRKSPDGEGT.

It belongs to the universal ribosomal protein uS10 family. In terms of assembly, part of the 30S ribosomal subunit.

Functionally, involved in the binding of tRNA to the ribosomes. The polypeptide is Small ribosomal subunit protein uS10 (Haloquadratum walsbyi (strain DSM 16790 / HBSQ001)).